We begin with the raw amino-acid sequence, 468 residues long: MKAASNSVSSAGGSVSPTTTQPPLPPGQSSHPQIYDQQMQYYFAAAMPNQPMATYAAQNGSSQQYAPAAPYYQDANGQYVQVPANGSMAPQQHMMVSGQPYLYMAQPQQGAQQVMQSGQPQLIYYQQSMAPQAAPMYFHPMQAAPMLPEQMGVMPHTQPAIPPQQQPRQVGVEISSTRTAPLTSSTPLPTSLEYETVQRDNRNRNIQFRYHRVMEHDELPIDEISKITLDNHNDDTMSAEKENHFHEHRGEKFGRRGFPIPETDSQQPPNYKTRLCMMHASGIKPCDMGARCKFAHGLKELRATDAPARYPNNKYKTKLCKNFARGGTGFCPYGLRCEFVHPTDKEFQNIPPYQRMSHDDQDYDQDVIPEDYVVARHQPRFMRTGGRATTPTKVMLKHRNVAGSMMCLSNAGRDLQAGGDYNQPESNEDDLPPHLRRNRRENPPMNKRRTSLSTKWTSEENLGLRGHY.

Positions 1–19 (MKAASNSVSSAGGSVSPTT) are enriched in low complexity. The interval 1–32 (MKAASNSVSSAGGSVSPTTTQPPLPPGQSSHP) is disordered. Thr-186 is modified (phosphothreonine; by mbk-2). Basic and acidic residues predominate over residues 243-254 (NHFHEHRGEKFG). Residues 243–269 (NHFHEHRGEKFGRRGFPIPETDSQQPP) are disordered. 2 C3H1-type zinc fingers span residues 270–299 (NYKTRLCMMHASGIKPCDMGARCKFAHGLK) and 314–344 (KYKTKLCKNFARGGTGFCPYGLRCEFVHPTD). A disordered region spans residues 414 to 468 (DLQAGGDYNQPESNEDDLPPHLRRNRRENPPMNKRRTSLSTKWTSEENLGLRGHY). Residues 451-460 (SLSTKWTSEE) show a composition bias toward polar residues. Phosphoserine is present on Ser-458.

In terms of assembly, interacts (when phosphorylated on Thr-186) with plk-1 (via POLO box domain) and plk-2 (via POLO box domain). In terms of processing, phosphorylation on Ser-458 by par-1 promotes localization of the protein to the anterior cytoplasm of the zygote. Phosphorylation by mbk-1 appears to be required for subsequent phosphorylation by plk-1. In terms of tissue distribution, asymmetrically localized to the anterior of the zygote before mitotic division, then differentially distributed to the somatic blastomere precursor cells.

The protein resides in the cytoplasm. Functionally, functions with mex-6 to affect embryonic viability, establish soma germline asymmetry in embryos and establish plk-1, pie-1, mex-1, and pos-1 asymmetry in embryos. Also affects formation of intestinal cells. Binds to mRNA in vitro, and inhibits pgl-3-mediated P-granule formation, probably by competing with pgl-3 for binding to mRNA. Required for neg-1 expression in anterior blastomeres during embryogenesis. The sequence is that of Zinc finger protein mex-5 from Caenorhabditis elegans.